The primary structure comprises 507 residues: Variant surface glycoprotein ILTAT 1.25 (507 aa).

The first 21 residues, 1–21 (MQSQQQPVFISIILLAINTDA), serve as a signal peptide directing secretion. Residues 83 to 95 (EPEAAPKESRSDE) show a composition bias toward basic and acidic residues. The interval 83–102 (EPEAAPKESRSDETPEACKA) is disordered. N-linked (GlcNAc...) asparagine glycans are attached at residues Asn141 and Asn371. Residues 384-395 (PTKQPPAKAAAA) show a composition bias toward low complexity. The disordered stretch occupies residues 384–474 (PTKQPPAKAA…KKEEECKSPN (91 aa)). Basic and acidic residues predominate over residues 396–420 (PEKKSNPQKDCNKNTKKRDCKEGDG). Residues 444–455 (SAAGAGDAGASD) show a composition bias toward low complexity. The span at 456–474 (TEAKKCSDKKKEEECKSPN) shows a compositional bias: basic and acidic residues. Asp484 is lipidated: GPI-anchor amidated aspartate. Residues 485-507 (SSILANKQFALSVASAAFVALLF) constitute a propeptide, removed in mature form.

It localises to the cell membrane. In terms of biological role, VSG forms a coat on the surface of the parasite. The trypanosome evades the immune response of the host by expressing a series of antigenically distinct VSGs from an estimated 1000 VSG genes. The polypeptide is Variant surface glycoprotein ILTAT 1.25 (Trypanosoma brucei brucei).